The following is a 324-amino-acid chain: Endochitinase A2 (324 aa).

The first 20 residues, 1–20 (MSKLRIPILLVLFIVSCCSA), serve as a signal peptide directing secretion. The 41-residue stretch at 21-61 (EQCGTQAGGALCPGGLCCSKFGWCGSTSEYCGDGCQSQCSG) folds into the Chitin-binding type-1 domain. Cystine bridges form between cysteine 23–cysteine 38, cysteine 32–cysteine 44, cysteine 37–cysteine 51, and cysteine 55–cysteine 59. Residue glutamate 133 is the Proton donor of the active site. Intrachain disulfides connect cysteine 151–cysteine 170 and cysteine 269–cysteine 301. The propeptide at 310–324 (SLPLSSILLDTVAAA) is removed in mature form.

This sequence belongs to the glycosyl hydrolase 19 family. Chitinase class I subfamily.

The catalysed reaction is Random endo-hydrolysis of N-acetyl-beta-D-glucosaminide (1-&gt;4)-beta-linkages in chitin and chitodextrins.. Functionally, defense against chitin-containing fungal pathogens. In Pisum sativum (Garden pea), this protein is Endochitinase A2 (CHI2).